The chain runs to 219 residues: MNNLRPALGIFGGTFDPVHYGHTESVIVAAQQAGVQSVAMLPCHIPVHKNHAPSDSHHRLAMLKLAIEQYPQLYIDEREIHSDTPSYTIHTLRALRKEYPKHPLCFFIGMDSLHSLLSWNEWQALFDYCHFVVCCRPGTKTPLSEELKALLVERQVATNNALHNALHGKIFLADTPELDISSSEIRRRIINNLPTDDMLAPKVRRYIQTHKLYQPSTTF.

It belongs to the NadD family.

The catalysed reaction is nicotinate beta-D-ribonucleotide + ATP + H(+) = deamido-NAD(+) + diphosphate. It participates in cofactor biosynthesis; NAD(+) biosynthesis; deamido-NAD(+) from nicotinate D-ribonucleotide: step 1/1. In terms of biological role, catalyzes the reversible adenylation of nicotinate mononucleotide (NaMN) to nicotinic acid adenine dinucleotide (NaAD). The polypeptide is Probable nicotinate-nucleotide adenylyltransferase (Pseudoalteromonas atlantica (strain T6c / ATCC BAA-1087)).